A 477-amino-acid chain; its full sequence is PEP-dependent dihydroxyacetone kinase, phosphoryl donor subunit DhaM (477 aa).

Residues 1–135 (MIGLIIVSHS…QALQAKQQQL (135 aa)) form the PTS EIIA type-4 domain. The active-site Tele-phosphohistidine intermediate is the H9. The HPr domain maps to 156-243 (ALTTQWVVKN…QLAQHNFGDN (88 aa)). H170 (pros-phosphohistidine intermediate) is an active-site residue. The segment at 269 to 477 (HAPNTELCIS…IETRSLIVAS (209 aa)) is PTS EI-like, N-terminal part. H435 functions as the Tele-phosphohistidine intermediate in the catalytic mechanism.

This sequence belongs to the PEP-utilizing enzyme family. As to quaternary structure, homodimer. The dihydroxyacetone kinase complex is composed of a homodimer of DhaM, a homodimer of DhaK and the subunit DhaL.

The catalysed reaction is dihydroxyacetone + phosphoenolpyruvate = dihydroxyacetone phosphate + pyruvate. Component of the dihydroxyacetone kinase complex, which is responsible for the phosphoenolpyruvate (PEP)-dependent phosphorylation of dihydroxyacetone. DhaM serves as the phosphoryl donor. Is phosphorylated by phosphoenolpyruvate in an EI- and HPr-dependent reaction, and a phosphorelay system on histidine residues finally leads to phosphoryl transfer to DhaL and dihydroxyacetone. This chain is PEP-dependent dihydroxyacetone kinase, phosphoryl donor subunit DhaM, found in Providencia stuartii (strain MRSN 2154).